We begin with the raw amino-acid sequence, 283 residues long: Pantothenate synthetase (283 aa).

26-33 (MGNLHAGH) contacts ATP. H33 acts as the Proton donor in catalysis. A (R)-pantoate-binding site is contributed by Q57. Q57 contacts beta-alanine. 144–147 (GRKD) contacts ATP. Q150 contacts (R)-pantoate. ATP contacts are provided by residues L173 and 181 to 184 (MSSR).

This sequence belongs to the pantothenate synthetase family. In terms of assembly, homodimer.

The protein localises to the cytoplasm. It carries out the reaction (R)-pantoate + beta-alanine + ATP = (R)-pantothenate + AMP + diphosphate + H(+). Its pathway is cofactor biosynthesis; (R)-pantothenate biosynthesis; (R)-pantothenate from (R)-pantoate and beta-alanine: step 1/1. Catalyzes the condensation of pantoate with beta-alanine in an ATP-dependent reaction via a pantoyl-adenylate intermediate. In Thiobacillus denitrificans (strain ATCC 25259 / T1), this protein is Pantothenate synthetase.